Here is a 547-residue protein sequence, read N- to C-terminus: Chaperonin GroEL (547 aa).

Residues 29 to 32 (TLGP), Lys50, 86 to 90 (DGTTT), Gly414, and Asp495 contribute to the ATP site. Residues 525-547 (PSDKEDSIPPMRGGMGGMGGMDF) are disordered. Gly residues predominate over residues 537 to 547 (GGMGGMGGMDF).

It belongs to the chaperonin (HSP60) family. As to quaternary structure, forms a cylinder of 14 subunits composed of two heptameric rings stacked back-to-back. Interacts with the co-chaperonin GroES.

Its subcellular location is the cytoplasm. It carries out the reaction ATP + H2O + a folded polypeptide = ADP + phosphate + an unfolded polypeptide.. Functionally, together with its co-chaperonin GroES, plays an essential role in assisting protein folding. The GroEL-GroES system forms a nano-cage that allows encapsulation of the non-native substrate proteins and provides a physical environment optimized to promote and accelerate protein folding. The chain is Chaperonin GroEL from Rickettsia felis (strain ATCC VR-1525 / URRWXCal2) (Rickettsia azadi).